Here is a 402-residue protein sequence, read N- to C-terminus: 4-hydroxy-3-methylbut-2-enyl diphosphate reductase (402 aa).

Cys-66 lines the [4Fe-4S] cluster pocket. Residue His-96 coordinates (2E)-4-hydroxy-3-methylbut-2-enyl diphosphate. His-96 is a binding site for dimethylallyl diphosphate. His-96 contacts isopentenyl diphosphate. Cys-157 provides a ligand contact to [4Fe-4S] cluster. His-185 provides a ligand contact to (2E)-4-hydroxy-3-methylbut-2-enyl diphosphate. His-185 is a binding site for dimethylallyl diphosphate. His-185 is an isopentenyl diphosphate binding site. Glu-187 functions as the Proton donor in the catalytic mechanism. (2E)-4-hydroxy-3-methylbut-2-enyl diphosphate is bound at residue Thr-250. Cys-288 provides a ligand contact to [4Fe-4S] cluster. 4 residues coordinate (2E)-4-hydroxy-3-methylbut-2-enyl diphosphate: Ser-317, Ser-318, Asn-319, and Ser-379. Dimethylallyl diphosphate is bound by residues Ser-317, Ser-318, Asn-319, and Ser-379. Residues Ser-317, Ser-318, Asn-319, and Ser-379 each contribute to the isopentenyl diphosphate site.

It belongs to the IspH family. [4Fe-4S] cluster serves as cofactor.

The catalysed reaction is isopentenyl diphosphate + 2 oxidized [2Fe-2S]-[ferredoxin] + H2O = (2E)-4-hydroxy-3-methylbut-2-enyl diphosphate + 2 reduced [2Fe-2S]-[ferredoxin] + 2 H(+). The enzyme catalyses dimethylallyl diphosphate + 2 oxidized [2Fe-2S]-[ferredoxin] + H2O = (2E)-4-hydroxy-3-methylbut-2-enyl diphosphate + 2 reduced [2Fe-2S]-[ferredoxin] + 2 H(+). The protein operates within isoprenoid biosynthesis; dimethylallyl diphosphate biosynthesis; dimethylallyl diphosphate from (2E)-4-hydroxy-3-methylbutenyl diphosphate: step 1/1. It participates in isoprenoid biosynthesis; isopentenyl diphosphate biosynthesis via DXP pathway; isopentenyl diphosphate from 1-deoxy-D-xylulose 5-phosphate: step 6/6. In terms of biological role, catalyzes the conversion of 1-hydroxy-2-methyl-2-(E)-butenyl 4-diphosphate (HMBPP) into a mixture of isopentenyl diphosphate (IPP) and dimethylallyl diphosphate (DMAPP). Acts in the terminal step of the DOXP/MEP pathway for isoprenoid precursor biosynthesis. This Gloeothece citriformis (strain PCC 7424) (Cyanothece sp. (strain PCC 7424)) protein is 4-hydroxy-3-methylbut-2-enyl diphosphate reductase.